The following is a 489-amino-acid chain: L-arabinose isomerase (489 aa).

Positions 300, 325, 342, and 441 each coordinate Mn(2+).

It belongs to the arabinose isomerase family. The cofactor is Mn(2+).

The catalysed reaction is beta-L-arabinopyranose = L-ribulose. The protein operates within carbohydrate degradation; L-arabinose degradation via L-ribulose; D-xylulose 5-phosphate from L-arabinose (bacterial route): step 1/3. In terms of biological role, catalyzes the conversion of L-arabinose to L-ribulose. This is L-arabinose isomerase from Clostridium beijerinckii (strain ATCC 51743 / NCIMB 8052) (Clostridium acetobutylicum).